A 201-amino-acid chain; its full sequence is ATP synthase subunit delta, chloroplastic (201 aa).

Belongs to the ATPase delta chain family. As to quaternary structure, F-type ATPases have 2 components, F(1) - the catalytic core - and F(0) - the membrane proton channel. F(1) has five subunits: alpha(3), beta(3), gamma(1), delta(1), epsilon(1). CF(0) has four main subunits: a(1), b(1), b'(1) and c(10-14). The alpha and beta chains form an alternating ring which encloses part of the gamma chain. F(1) is attached to F(0) by a central stalk formed by the gamma and epsilon chains, while a peripheral stalk is formed by the delta, b and b' chains.

It localises to the plastid. Its subcellular location is the chloroplast thylakoid membrane. In terms of biological role, f(1)F(0) ATP synthase produces ATP from ADP in the presence of a proton or sodium gradient. F-type ATPases consist of two structural domains, F(1) containing the extramembraneous catalytic core and F(0) containing the membrane proton channel, linked together by a central stalk and a peripheral stalk. During catalysis, ATP synthesis in the catalytic domain of F(1) is coupled via a rotary mechanism of the central stalk subunits to proton translocation. Its function is as follows. This protein is part of the stalk that links CF(0) to CF(1). It either transmits conformational changes from CF(0) to CF(1) or is implicated in proton conduction. In Vaucheria litorea (Yellow-green alga), this protein is ATP synthase subunit delta, chloroplastic.